A 118-amino-acid chain; its full sequence is MNTIDMLELEQMKKNIPPFKPGDTVKVHVKIVEGDKSRIQAFQGVVIARQNGGIRESFTVRKISNGIGVERVFPLHSPSLDAIEVITRGHVRRAKLYYLRKLRGKAARIREKKYVAAH.

Belongs to the bacterial ribosomal protein bL19 family.

This protein is located at the 30S-50S ribosomal subunit interface and may play a role in the structure and function of the aminoacyl-tRNA binding site. The sequence is that of Large ribosomal subunit protein bL19 from Geobacter metallireducens (strain ATCC 53774 / DSM 7210 / GS-15).